Reading from the N-terminus, the 155-residue chain is Large ribosomal subunit protein uL30 (155 aa).

Belongs to the universal ribosomal protein uL30 family. As to quaternary structure, part of the 50S ribosomal subunit.

This Pyrococcus horikoshii (strain ATCC 700860 / DSM 12428 / JCM 9974 / NBRC 100139 / OT-3) protein is Large ribosomal subunit protein uL30.